The primary structure comprises 338 residues: D-erythrose-4-phosphate dehydrogenase (338 aa).

11 to 12 (RI) contacts NAD(+). Substrate is bound by residues 153–155 (SCT), Arg-199, 212–213 (TK), and Arg-235. The active-site Nucleophile is the Cys-154. Asn-317 is a binding site for NAD(+).

This sequence belongs to the glyceraldehyde-3-phosphate dehydrogenase family. Epd subfamily. In terms of assembly, homotetramer.

The protein localises to the cytoplasm. It catalyses the reaction D-erythrose 4-phosphate + NAD(+) + H2O = 4-phospho-D-erythronate + NADH + 2 H(+). Its pathway is cofactor biosynthesis; pyridoxine 5'-phosphate biosynthesis; pyridoxine 5'-phosphate from D-erythrose 4-phosphate: step 1/5. Its function is as follows. Catalyzes the NAD-dependent conversion of D-erythrose 4-phosphate to 4-phosphoerythronate. This Shewanella amazonensis (strain ATCC BAA-1098 / SB2B) protein is D-erythrose-4-phosphate dehydrogenase.